Consider the following 22-residue polypeptide: Chlorate reductase subunit gamma (22 aa).

Residues 1 to 22 form a disordered region; the sequence is EXSEQNPNILEIKPGDTVKVXT.

Heterotrimer of alpha, beta and gamma subunits. It depends on heme b as a cofactor.

It is found in the cytoplasm. Its function is as follows. May transfer electrons to the iron-sulfur centers of the beta subunit of chlorate reductase. The chain is Chlorate reductase subunit gamma from Stutzerimonas chloritidismutans (Pseudomonas chloritidismutans).